The following is a 444-amino-acid chain: Tol-Pal system protein TolB (444 aa).

The first 19 residues, 1 to 19 (MRNIIYFILSLLFSFASYA), serve as a signal peptide directing secretion.

This sequence belongs to the TolB family. As to quaternary structure, the Tol-Pal system is composed of five core proteins: the inner membrane proteins TolA, TolQ and TolR, the periplasmic protein TolB and the outer membrane protein Pal. They form a network linking the inner and outer membranes and the peptidoglycan layer.

It localises to the periplasm. Its function is as follows. Part of the Tol-Pal system, which plays a role in outer membrane invagination during cell division and is important for maintaining outer membrane integrity. This chain is Tol-Pal system protein TolB, found in Rickettsia massiliae (strain Mtu5).